We begin with the raw amino-acid sequence, 285 residues long: uncharacterized protein (285 aa).

Residues His110, Asp131, His133, Asp135, Asp214, and Asp216 each contribute to the Mn(2+) site.

It belongs to the arginase family. It depends on Mn(2+) as a cofactor.

This is an uncharacterized protein from Methanothermus fervidus.